The following is a 112-amino-acid chain: Colipase (112 aa).

The N-terminal stretch at 1 to 17 is a signal peptide; it reads MKVLVVLLVTLVAVAYA. A propeptide spans 18-22 (enterostatin, activation peptide); it reads APGPR. Intrachain disulfides connect Cys34-Cys45, Cys40-Cys56, Cys44-Cys78, Cys66-Cys86, and Cys80-Cys104.

The protein belongs to the colipase family. Forms a 1:1 stoichiometric complex with pancreatic lipase. In terms of tissue distribution, expressed by the pancreas.

The protein resides in the secreted. In terms of biological role, colipase is a cofactor of pancreatic lipase. It allows the lipase to anchor itself to the lipid-water interface. Without colipase the enzyme is washed off by bile salts, which have an inhibitory effect on the lipase. Functionally, enterostatin has a biological activity as a satiety signal. This chain is Colipase, found in Rattus norvegicus (Rat).